Consider the following 150-residue polypeptide: Large ribosomal subunit protein bL9 (150 aa).

It belongs to the bacterial ribosomal protein bL9 family.

Functionally, binds to the 23S rRNA. This Polynucleobacter necessarius subsp. necessarius (strain STIR1) protein is Large ribosomal subunit protein bL9.